Reading from the N-terminus, the 637-residue chain is Protein arginine N-methyltransferase 5 (637 aa).

Ala-2 carries the N-acetylalanine modification. The interval 13–292 (RVSSGRDLNC…YLEYLSQNRP (280 aa)) is TIM barrel. In terms of domain architecture, SAM-dependent MTase PRMT-type spans 308–615 (LQSPLQPLMD…SNSKKVWYEW (308 aa)). Tyr-324 is a binding site for S-adenosyl-L-methionine. Phe-327 contacts a protein. S-adenosyl-L-methionine is bound by residues 333-334 (KY), Glu-392, and 419-420 (DM). 2 residues coordinate a protein: Glu-435 and Glu-444. Catalysis depends on proton donor/acceptor residues Glu-435 and Glu-444. The interval 465–637 (PGEYTSFLAP…PTGRSYTIGL (173 aa)) is beta barrel. Residues 488 to 494 (REKDRDP) form a dimerization region.

The protein belongs to the class I-like SAM-binding methyltransferase superfamily. Protein arginine N-methyltransferase family. As to quaternary structure, forms, at least, homodimers and homotetramers. Component of the methylosome complex, composed of PRMT5, WDR77 and CLNS1A. Found in a complex composed of PRMT5, WDR77 and RIOK1. RIOK1 and CLNS1A associate with PRMT5 in a mutually exclusive fashion, which allows the recruitment of distinct methylation substrates, such as nucleolin/NCL and Sm proteins, respectively. Interacts with PRDM1. Identified in a complex composed of methylosome and PRMT1 and ERH. Interacts with EGFR; methylates EGFR and stimulates EGFR-mediated ERK activation. Interacts with HOXA9. Interacts with SRGAP2. Found in a complex with COPRS, RUNX1 and CBFB. Interacts with CHTOP; the interaction symmetrically methylates CHTOP, but seems to require the presence of PRMT1. Interacts with EPB41L3; this modulates methylation of target proteins. Component of a high molecular weight E2F-pocket protein complex, CERC (cyclin E1 repressor complex). Associates with SWI/SNF remodeling complexes containing SMARCA2 and SMARCA4. Interacts with JAK2, SSTR1, SUPT5H, BRAF and with active RAF1. Interacts with LSM11, PRMT7 and SNRPD3. Interacts with COPRS; promoting its recruitment on histone H4. Interacts with CLNS1A/pICln. Identified in a complex with CLNS1A/pICln and Sm proteins. Interacts with RPS10. Interacts with WDR77. Interacts with IWS1. Interacts with CRY1. Interacts with POLR2A. Interacts with SMN1/SMN2. Interacts with LYAR; this interaction is direct. Interacts with TTC5/STRAP; this interaction is DNA damage-dependent and promotes PRMT5 interaction with p53/TP53. Interacts with p53/TP53 in response to DNA damage; the interaction is TTC5/STRAP dependent. Interacts with FAM47E; the interaction is direct, promotes PRMT5 localization to chromatin, and does not disrupt its association with WDR77 or STUB1. Interacts with TDRD6. Interacts with STUB1. Interacts with MBD2. Does not interact with MBD3.

The protein resides in the cytoplasm. The protein localises to the nucleus. Its subcellular location is the golgi apparatus. It catalyses the reaction L-arginyl-[protein] + 2 S-adenosyl-L-methionine = N(omega),N(omega)'-dimethyl-L-arginyl-[protein] + 2 S-adenosyl-L-homocysteine + 2 H(+). Activity is increased by EGF, HGF, FGF1 or FGF2 treatments, and slightly decreased by NGF treatment. Its function is as follows. Arginine methyltransferase that can both catalyze the formation of omega-N monomethylarginine (MMA) and symmetrical dimethylarginine (sDMA), with a preference for the formation of MMA. Specifically mediates the symmetrical dimethylation of arginine residues in the small nuclear ribonucleoproteins Sm D1 (SNRPD1) and Sm D3 (SNRPD3); such methylation being required for the assembly and biogenesis of snRNP core particles. Methylates SUPT5H and may regulate its transcriptional elongation properties. May methylate the N-terminal region of MBD2. Mono- and dimethylates arginine residues of myelin basic protein (MBP) in vitro. May play a role in cytokine-activated transduction pathways. Negatively regulates cyclin E1 promoter activity and cellular proliferation. Methylates histone H2A and H4 'Arg-3' during germ cell development. Methylates histone H3 'Arg-8', which may repress transcription. Methylates the Piwi proteins (PIWIL1, PIWIL2 and PIWIL4), methylation of Piwi proteins being required for the interaction with Tudor domain-containing proteins and subsequent localization to the meiotic nuage. Methylates RPS10. Attenuates EGF signaling through the MAPK1/MAPK3 pathway acting at 2 levels. First, monomethylates EGFR; this enhances EGFR 'Tyr-1197' phosphorylation and PTPN6 recruitment, eventually leading to reduced SOS1 phosphorylation. Second, methylates RAF1 and probably BRAF, hence destabilizing these 2 signaling proteins and reducing their catalytic activity. Required for induction of E-selectin and VCAM-1, on the endothelial cells surface at sites of inflammation. Methylates HOXA9. Methylates and regulates SRGAP2 which is involved in cell migration and differentiation. Acts as a transcriptional corepressor in CRY1-mediated repression of the core circadian component PER1 by regulating the H4R3 dimethylation at the PER1 promoter. Methylates GM130/GOLGA2, regulating Golgi ribbon formation. Methylates H4R3 in genes involved in glioblastomagenesis in a CHTOP- and/or TET1-dependent manner. Symmetrically methylates POLR2A, a modification that allows the recruitment to POLR2A of proteins including SMN1/SMN2 and SETX. This is required for resolving RNA-DNA hybrids created by RNA polymerase II, that form R-loop in transcription terminal regions, an important step in proper transcription termination. Along with LYAR, binds the promoter of gamma-globin HBG1/HBG2 and represses its expression. Symmetrically methylates NCL. Methylates p53/TP53; methylation might possibly affect p53/TP53 target gene specificity. Involved in spliceosome maturation and mRNA splicing in prophase I spermatocytes through the catalysis of the symmetrical arginine dimethylation of SNRPB (small nuclear ribonucleoprotein-associated protein) and the interaction with tudor domain-containing protein TDRD6. This is Protein arginine N-methyltransferase 5 (Prmt5) from Mus musculus (Mouse).